A 916-amino-acid polypeptide reads, in one-letter code: DNA gyrase subunit A (916 aa).

The Topo IIA-type catalytic domain occupies 42–544 (LPDVRDGLKP…FGGDIADEDL (503 aa)). Tyr-130 (O-(5'-phospho-DNA)-tyrosine intermediate) is an active-site residue. The GyrA-box motif lies at 571–577 (QRRGGRG). The segment covering 739–748 (SDDLEDETAD) has biased composition (acidic residues). Disordered regions lie at residues 739–774 (SDDLEDETADNENTLPSGKNGVRPSGRGSGGLRGMR) and 897–916 (ESELSGASVISNVTEPEAEN).

It belongs to the type II topoisomerase GyrA/ParC subunit family. Heterotetramer, composed of two GyrA and two GyrB chains. In the heterotetramer, GyrA contains the active site tyrosine that forms a transient covalent intermediate with DNA, while GyrB binds cofactors and catalyzes ATP hydrolysis.

It localises to the cytoplasm. The enzyme catalyses ATP-dependent breakage, passage and rejoining of double-stranded DNA.. In terms of biological role, a type II topoisomerase that negatively supercoils closed circular double-stranded (ds) DNA in an ATP-dependent manner to modulate DNA topology and maintain chromosomes in an underwound state. Negative supercoiling favors strand separation, and DNA replication, transcription, recombination and repair, all of which involve strand separation. Also able to catalyze the interconversion of other topological isomers of dsDNA rings, including catenanes and knotted rings. Type II topoisomerases break and join 2 DNA strands simultaneously in an ATP-dependent manner. This chain is DNA gyrase subunit A, found in Neisseria gonorrhoeae.